Reading from the N-terminus, the 260-residue chain is Universal stress protein PHOS34 (260 aa).

The N-terminal 33 residues, 1–33 (MNPDSDYPHLPNIKIHHPSSPRHSHHHSSSTPS), are a transit peptide targeting the chloroplast. Residues 1 to 42 (MNPDSDYPHLPNIKIHHPSSPRHSHHHSSSTPSAATPTPTAG) form a disordered region. The span at 14–28 (KIHHPSSPRHSHHHS) shows a compositional bias: basic residues. Pro18 serves as a coordination point for ATP. Ser20 is subject to Phosphoserine; by MAPK3 and MAPK6. Over residues 29–41 (SSTPSAATPTPTA) the composition is skewed to low complexity. Val80 provides a ligand contact to ATP. A disordered region spans residues 92–118 (GPLPLQTPPPPSAATDPGAQPKPSQED). ATP contacts are provided by residues 170-179 (GSRGFGAEKR) and 187-189 (SVS). Positions 209-260 (RDGPAPPGNVGATREAIVTVKSRRDDDDDDDEDHEAKIAAAASDHHEHIKDE) are disordered. Ser230 carries the post-translational modification Phosphoserine. Positions 251-260 (SDHHEHIKDE) are enriched in basic and acidic residues.

The protein belongs to the universal stress protein A family. Phosphorylated by MAPK3 and MAPK6 after pathogenic elicitation (e.g. bacterial flg22, Phytophthora infestans zoospores and xylanase).

It localises to the plastid. The protein resides in the chloroplast. In Arabidopsis thaliana (Mouse-ear cress), this protein is Universal stress protein PHOS34.